A 505-amino-acid polypeptide reads, in one-letter code: Serine carboxypeptidase-like 47 (505 aa).

The first 22 residues, 1–22 (MEAKTFFLFMLFIFSQSWLSTS), serve as a signal peptide directing secretion. 3 N-linked (GlcNAc...) asparagine glycosylation sites follow: Asn37, Asn86, and Asn122. Disulfide bonds link Cys138-Cys378, Cys306-Cys321, and Cys344-Cys349. Ser228 is an active-site residue. A glycan (N-linked (GlcNAc...) asparagine) is linked at Asn301. Asp416 is an active-site residue. N-linked (GlcNAc...) asparagine glycans are attached at residues Asn432 and Asn444. His473 is a catalytic residue.

It belongs to the peptidase S10 family. Expressed in roots, flowers and siliques.

It localises to the secreted. Functionally, probable carboxypeptidase. The chain is Serine carboxypeptidase-like 47 (SCPL47) from Arabidopsis thaliana (Mouse-ear cress).